Consider the following 292-residue polypeptide: 2-(5''-triphosphoribosyl)-3'-dephosphocoenzyme-A synthase (292 aa).

It belongs to the CitG/MdcB family.

The enzyme catalyses 3'-dephospho-CoA + ATP = 2'-(5''-triphospho-alpha-D-ribosyl)-3'-dephospho-CoA + adenine. Functionally, catalyzes the formation of 2-(5''-triphosphoribosyl)-3'-dephosphocoenzyme-A, the precursor of the prosthetic group of the holo-acyl carrier protein (gamma chain) of citrate lyase, from ATP and dephospho-CoA. The sequence is that of 2-(5''-triphosphoribosyl)-3'-dephosphocoenzyme-A synthase from Escherichia coli O139:H28 (strain E24377A / ETEC).